The following is a 71-amino-acid chain: Protein MTH_1184 (71 aa).

This is Protein MTH_1184 from Methanothermobacter thermautotrophicus (strain ATCC 29096 / DSM 1053 / JCM 10044 / NBRC 100330 / Delta H) (Methanobacterium thermoautotrophicum).